The following is a 619-amino-acid chain: Elongation factor 4 (619 aa).

Positions 17–198 (SVIRNFCIIA…RVVRAIPGPE (182 aa)) constitute a tr-type G domain. Residues 29–34 (DHGKST) and 145–148 (NKID) contribute to the GTP site.

Belongs to the TRAFAC class translation factor GTPase superfamily. Classic translation factor GTPase family. LepA subfamily.

Its subcellular location is the cell membrane. It carries out the reaction GTP + H2O = GDP + phosphate + H(+). In terms of biological role, required for accurate and efficient protein synthesis under certain stress conditions. May act as a fidelity factor of the translation reaction, by catalyzing a one-codon backward translocation of tRNAs on improperly translocated ribosomes. Back-translocation proceeds from a post-translocation (POST) complex to a pre-translocation (PRE) complex, thus giving elongation factor G a second chance to translocate the tRNAs correctly. Binds to ribosomes in a GTP-dependent manner. This is Elongation factor 4 from Micrococcus luteus (strain ATCC 4698 / DSM 20030 / JCM 1464 / CCM 169 / CCUG 5858 / IAM 1056 / NBRC 3333 / NCIMB 9278 / NCTC 2665 / VKM Ac-2230) (Micrococcus lysodeikticus).